Consider the following 244-residue polypeptide: uncharacterized protein (244 aa).

6 helical membrane passes run 22–42 (IMLQFVAILFIVQSASALLSF), 63–83 (FIFSVAITQILTSFIAAWGLT), 110–130 (VILLDLLMVAPMLLGLGEAFA), 140–160 (IMSLIAMLVGVWFFVRLNLTV), 186–206 (GVLFIYTLLVYFLVPILIFQL), and 213–233 (AVFDMVIGIFTALLNIFMLVV).

It is found in the cell membrane. This is an uncharacterized protein from Haemophilus influenzae (strain ATCC 51907 / DSM 11121 / KW20 / Rd).